The chain runs to 123 residues: UPF0102 protein CLD_2200 (123 aa).

It belongs to the UPF0102 family.

In Clostridium botulinum (strain Okra / Type B1), this protein is UPF0102 protein CLD_2200.